The primary structure comprises 178 residues: Ribosome maturation factor RimP (178 aa).

It belongs to the RimP family.

Its subcellular location is the cytoplasm. Functionally, required for maturation of 30S ribosomal subunits. In Mycolicibacterium gilvum (strain PYR-GCK) (Mycobacterium gilvum (strain PYR-GCK)), this protein is Ribosome maturation factor RimP.